A 432-amino-acid polypeptide reads, in one-letter code: Phosphoribosylamine--glycine ligase (432 aa).

Positions 110–316 (RNFMKDNDIE…MIDVMSAVVN (207 aa)) constitute an ATP-grasp domain. 137–194 (IEELGSVAIKPAGLTGGKGVKVMGDQLPDTGAAYDYAVSLLDGDNVVVEENLVGEEFT) is a binding site for ATP. 3 residues coordinate Mg(2+): Gln-274, Glu-286, and Asn-288. Residues Gln-274, Glu-286, and Asn-288 each contribute to the Mn(2+) site.

Belongs to the GARS family. The cofactor is Mg(2+). It depends on Mn(2+) as a cofactor.

It catalyses the reaction 5-phospho-beta-D-ribosylamine + glycine + ATP = N(1)-(5-phospho-beta-D-ribosyl)glycinamide + ADP + phosphate + H(+). It participates in purine metabolism; IMP biosynthesis via de novo pathway; N(1)-(5-phospho-D-ribosyl)glycinamide from 5-phospho-alpha-D-ribose 1-diphosphate: step 2/2. In Methanococcoides burtonii (strain DSM 6242 / NBRC 107633 / OCM 468 / ACE-M), this protein is Phosphoribosylamine--glycine ligase.